The sequence spans 365 residues: Anthranilate phosphoribosyltransferase (365 aa).

Residues Gly-96, 99 to 100 (GD), Thr-104, 106 to 109 (NIST), 124 to 132 (KHGNRSVSS), and Ser-136 each bind 5-phospho-alpha-D-ribose 1-diphosphate. Gly-96 contacts anthranilate. Ser-108 contacts Mg(2+). Asn-127 contacts anthranilate. Arg-182 is a binding site for anthranilate. Mg(2+) contacts are provided by Asp-240 and Glu-241.

It belongs to the anthranilate phosphoribosyltransferase family. As to quaternary structure, homodimer. The cofactor is Mg(2+).

The catalysed reaction is N-(5-phospho-beta-D-ribosyl)anthranilate + diphosphate = 5-phospho-alpha-D-ribose 1-diphosphate + anthranilate. The protein operates within amino-acid biosynthesis; L-tryptophan biosynthesis; L-tryptophan from chorismate: step 2/5. In terms of biological role, catalyzes the transfer of the phosphoribosyl group of 5-phosphorylribose-1-pyrophosphate (PRPP) to anthranilate to yield N-(5'-phosphoribosyl)-anthranilate (PRA). This chain is Anthranilate phosphoribosyltransferase, found in Colwellia psychrerythraea (strain 34H / ATCC BAA-681) (Vibrio psychroerythus).